Consider the following 525-residue polypeptide: Vesicular inhibitory amino acid transporter (525 aa).

Over 1–132 (MATLLRSKLS…WNVTNAIQGM (132 aa)) the chain is Cytoplasmic. The tract at residues 69–111 (PCGDEGAEPPVEGDIHYQRGSGAPLPPSGSKDQVGAGGEFGGH) is disordered. A helical membrane pass occupies residues 133–153 (FVLGLPYAILHGGYLGLFLII). Residues 154–204 (FAAVVCCYTGKILIACLYEENEDGEVVRVRDSYVAIANACCAPRFPTLGGR) are Lumenal, vesicle-facing. 3'-nitrotyrosine is present on Tyr186. The helical transmembrane segment at 205-225 (VVNVAQIIELVMTCILYVVVS) threads the bilayer. Over 226–265 (GNLMYNSFPGLPVSQKSWSIIATAVLLPCAFLKNLKAVSK) the chain is Cytoplasmic. A helical membrane pass occupies residues 266-286 (FSLLCTLAHFVINILVIAYCL). The Lumenal, vesicle portion of the chain corresponds to 287–305 (SRARDWAWEKVKFYIDVKK). Residues 306-326 (FPISIGIIVFSYTSQIFLPSL) traverse the membrane as a helical segment. The Cytoplasmic segment spans residues 327–341 (EGNMQQPSEFHCMMN). The helical transmembrane segment at 342–362 (WTHIAACVLKGLFALVAYLTW) threads the bilayer. Residues 363–383 (ADETKEVITDNLPGSIRAVVN) are Lumenal, vesicle-facing. A helical transmembrane segment spans residues 384–404 (IFLVAKALLSYPLPFFAAVEV). Residues 405-438 (LEKSLFQEGSRAFFPACYGGDGRLKSWGLTLRCA) lie on the Cytoplasmic side of the membrane. Residues 439-459 (LVVFTLLMAIYVPHFALLMGL) traverse the membrane as a helical segment. Topologically, residues 460–461 (TG) are lumenal, vesicle. Residues 462–482 (SLTGAGLCFLLPSLFHLRLLW) traverse the membrane as a helical segment. Residues 483–489 (RKLLWHQ) lie on the Cytoplasmic side of the membrane. The helical transmembrane segment at 490–510 (VFFDVAIFVIGGICSVSGFVH) threads the bilayer. Over 511–525 (SLEGLIEAYRTNAED) the chain is Lumenal, vesicle.

This sequence belongs to the amino acid/polyamine transporter 2 family.

Its subcellular location is the cytoplasmic vesicle membrane. The protein resides in the presynapse. It carries out the reaction 4-aminobutanoate(out) + n H(+)(in) = 4-aminobutanoate(in) + n H(+)(out). The catalysed reaction is glycine(out) + n H(+)(in) = glycine(in) + n H(+)(out). The enzyme catalyses beta-alanine(out) + n H(+)(in) = beta-alanine(in) + n H(+)(out). Antiporter that exchanges vesicular protons for cytosolic 4-aminobutanoate or to a lesser extend glycine, thus allowing their secretion from nerve terminals. The transport is equally dependent on the chemical and electrical components of the proton gradient. May also transport beta-alanine. Acidification of GABAergic synaptic vesicles is a prerequisite for 4-aminobutanoate uptake. The sequence is that of Vesicular inhibitory amino acid transporter from Macaca fascicularis (Crab-eating macaque).